Consider the following 363-residue polypeptide: S-adenosylmethionine:tRNA ribosyltransferase-isomerase (363 aa).

This sequence belongs to the QueA family. Monomer.

The protein localises to the cytoplasm. The enzyme catalyses 7-aminomethyl-7-carbaguanosine(34) in tRNA + S-adenosyl-L-methionine = epoxyqueuosine(34) in tRNA + adenine + L-methionine + 2 H(+). The protein operates within tRNA modification; tRNA-queuosine biosynthesis. Transfers and isomerizes the ribose moiety from AdoMet to the 7-aminomethyl group of 7-deazaguanine (preQ1-tRNA) to give epoxyqueuosine (oQ-tRNA). This is S-adenosylmethionine:tRNA ribosyltransferase-isomerase from Brucella melitensis biotype 2 (strain ATCC 23457).